Reading from the N-terminus, the 97-residue chain is DNA/RNA-binding protein Alba (97 aa).

Residue lysine 15 is modified to N6-acetyllysine.

It belongs to the histone-like Alba family. In terms of processing, acetylated. Acetylation at Lys-15 decreases DNA-binding affinity.

It is found in the cytoplasm. The protein localises to the chromosome. In terms of biological role, binds double-stranded DNA tightly but without sequence specificity. Involved in DNA compaction. This chain is DNA/RNA-binding protein Alba, found in Ignicoccus hospitalis (strain KIN4/I / DSM 18386 / JCM 14125).